The chain runs to 600 residues: Alanine--tRNA ligase (600 aa).

Zn(2+) is bound by residues His463, His467, Cys565, and His569.

The protein belongs to the class-II aminoacyl-tRNA synthetase family. Requires Zn(2+) as cofactor.

Its subcellular location is the cytoplasm. It catalyses the reaction tRNA(Ala) + L-alanine + ATP = L-alanyl-tRNA(Ala) + AMP + diphosphate. Catalyzes the attachment of alanine to tRNA(Ala) in a two-step reaction: alanine is first activated by ATP to form Ala-AMP and then transferred to the acceptor end of tRNA(Ala). Also edits incorrectly charged Ser-tRNA(Ala) and Gly-tRNA(Ala) via its editing domain. The sequence is that of Alanine--tRNA ligase (alaS) from Treponema denticola (strain ATCC 35405 / DSM 14222 / CIP 103919 / JCM 8153 / KCTC 15104).